The sequence spans 201 residues: Regulator of G-protein signaling rgs-1 (201 aa).

The RGS domain occupies 37–156 (SWQQSFDTLM…FLTSIFYRET (120 aa)). Residues 168 to 201 (GGDEEKEREQRAERARLNVPATAAEGSSKDISMV) are disordered. Positions 170–183 (DEEKEREQRAERAR) are enriched in basic and acidic residues.

In terms of tissue distribution, expressed in most or all neurons.

Inhibits G protein signaling in nervous system, interacting preferentially with the G(O) subfamily member goa-1. In vitro, protein acts as a GTPase activator of goa-1. Rgs-1 and rgs-2 redundantly adjust signaling when worms are fed to allow rapid induction of egg-laying behavior. The chain is Regulator of G-protein signaling rgs-1 (rgs-1) from Caenorhabditis elegans.